Here is a 695-residue protein sequence, read N- to C-terminus: RING finger protein 145 (695 aa).

Transmembrane regions (helical) follow at residues 53-73, 77-97, 123-143, 146-166, 168-188, 225-245, 275-295, 316-336, 340-360, 384-404, 410-430, 460-480, and 482-502; these read YLALNMHYVGYILSVVLLTLP, LAKLYLYFVAALLLFAGHQIS, FITALVGQLVVCTLCSCVMKT, IWLFSAHMLPLLARLCLIPIE, IVVINKFAMIFTGLEVLYFLA, LVVPVLFMVFWLVLFALQIYT, YSLLGLVFTVSFVALGVLTLC, TEGVTLLILAVQTGLIELQVV, FLLSIILFIVVASILQSMLEI, SLCLFLLVFPSYMAYMICQFF, LLIIISSSILTSLQVLGTLFV, LLEFLVALCVVAYGVSETVFG, and WTVMGSMIIFIHSYYNVWLRA. The segment at 537–575 adopts an RING-type; atypical zinc-finger fold; that stretch reads CSICYQDMNSAVITPCSHFFHPGCLKKWLYVQETCPLCH. The segment covering 589-604 has biased composition (polar residues); sequence SGSSTNPVVEQSANNP. The interval 589–608 is disordered; it reads SGSSTNPVVEQSANNPPQEP.

It is found in the membrane. In Xenopus laevis (African clawed frog), this protein is RING finger protein 145 (rnf145).